A 330-amino-acid polypeptide reads, in one-letter code: tRNA-modifying protein YgfZ (330 aa).

Folate contacts are provided by Trp-28 and Trp-190.

It belongs to the tRNA-modifying YgfZ family.

Its subcellular location is the cytoplasm. Functionally, folate-binding protein involved in regulating the level of ATP-DnaA and in the modification of some tRNAs. It is probably a key factor in regulatory networks that act via tRNA modification, such as initiation of chromosomal replication. In Yersinia pestis bv. Antiqua (strain Antiqua), this protein is tRNA-modifying protein YgfZ.